The following is a 419-amino-acid chain: Dimethylallyltryptophan synthase 1 (419 aa).

Residues F81, M82, and E90 each contribute to the L-tryptophan site. F81 lines the L-tyrosine pocket. Residues R105, K187, Y189, R251, K253, and Y255 each coordinate (2E)-geranyl diphosphate. R105, K187, Y189, R251, K253, and Y255 together coordinate dimethylallyl diphosphate. R257 is an L-tryptophan binding site. Residue R257 participates in L-tyrosine binding. The (2E)-geranyl diphosphate site is built by K332 and Y334. The dimethylallyl diphosphate site is built by K332 and Y334. An L-tryptophan-binding site is contributed by Y389. L-tyrosine is bound at residue Y389. Residue Y404 participates in (2E)-geranyl diphosphate binding.

Belongs to the tryptophan dimethylallyltransferase family.

The enzyme catalyses L-tyrosine + dimethylallyl diphosphate = 4-O-dimethylallyl-L-tyrosine + diphosphate. In terms of biological role, dimethylallyltryptophan synthase; part of the DMATS1 gene cluster that mediates the biosynthesis of a reversely N-prenylated monomeric L-tryptophan (r-N-DMAT). DMATS1 catalyzes the reverse N-prenylation of L-Trp with DMAPP to yield N-dimethylallyl-L-tryptophan. DMATS1 exhibits unusually broad substrate specificity and can utilize geranyl diphosphate (GPP) or L-Tyr as an alternative prenyl donor or acceptor, respectively. Is able to catalyze both forward and reverse prenylation, i.e., at C1 or C3 of DMAPP; and it can catalyze C-N and C-O bond-forming reactions. The main product of the cluster is the reverse-N-dimethylallyl-L-tryptophan (r-N-DMAT) produced by the dimethylallyltryptophan synthase DMATS1 and it remains unclear whether this metabolite undergoes further modifications when silent gene clusters are activated. The acetylated form of r-N-DMAT, ac-r-N-DMAT, is also produced. The roles of the cytochrome P450 monooxygenase FFUJ_09176 and the methyltransferase FFUJ_09178 have still to be elucidated. The chain is Dimethylallyltryptophan synthase 1 from Gibberella fujikuroi (strain CBS 195.34 / IMI 58289 / NRRL A-6831) (Bakanae and foot rot disease fungus).